Consider the following 225-residue polypeptide: Lipoprotein-releasing system ATP-binding protein LolD (225 aa).

Residues 5 to 225 (LEVMDLTKGY…RLVDGRVVAD (221 aa)) form the ABC transporter domain. Position 41-48 (41-48 (GASGTGKS)) interacts with ATP.

It belongs to the ABC transporter superfamily. Lipoprotein translocase (TC 3.A.1.125) family. The complex is composed of two ATP-binding proteins (LolD) and two transmembrane proteins (LolC and LolE).

The protein resides in the cell inner membrane. In terms of biological role, part of the ABC transporter complex LolCDE involved in the translocation of mature outer membrane-directed lipoproteins, from the inner membrane to the periplasmic chaperone, LolA. Responsible for the formation of the LolA-lipoprotein complex in an ATP-dependent manner. In Geobacter metallireducens (strain ATCC 53774 / DSM 7210 / GS-15), this protein is Lipoprotein-releasing system ATP-binding protein LolD.